The chain runs to 995 residues: Epididymis-specific alpha-mannosidase (995 aa).

Positions Met1–Ala21 are cleaved as a signal peptide. Residues His36, Asp38, and Asp151 each contribute to the Zn(2+) site. Asp151 acts as the Nucleophile in catalysis. N-linked (GlcNAc...) asparagine glycosylation occurs at Asn285. Residue His411 coordinates Zn(2+). N-linked (GlcNAc...) asparagine glycosylation is found at Asn593, Asn625, Asn657, Asn733, Asn793, Asn875, and Asn977. Positions Thr956–Asn977 are disordered.

The protein belongs to the glycosyl hydrolase 38 family. Requires Zn(2+) as cofactor. In terms of processing, processed into a 27 kDa fragment localized on the equatorial segment and the apical rim of the head of mature sperm. In terms of tissue distribution, specific to the caput and corpus of the epididymis.

The protein localises to the secreted. It catalyses the reaction Hydrolysis of terminal, non-reducing alpha-D-mannose residues in alpha-D-mannosides.. Functionally, can digest both p-nitro-phenyl-alpha-D-mannoside and high mannose oligosaccharide (Man(8)-GlcNAc(2)). May be involved in sperm maturation. Has a possible role in specific sperm-egg interaction since sperm surface mannosidase acts like a receptor for mannose-containing oligosaccharides located on the zona pellucida. The polypeptide is Epididymis-specific alpha-mannosidase (MAN2B2) (Sus scrofa (Pig)).